The sequence spans 87 residues: Small ribosomal subunit protein uS15 (87 aa).

Belongs to the universal ribosomal protein uS15 family. In terms of assembly, part of the 30S ribosomal subunit. Forms a bridge to the 50S subunit in the 70S ribosome, contacting the 23S rRNA.

One of the primary rRNA binding proteins, it binds directly to 16S rRNA where it helps nucleate assembly of the platform of the 30S subunit by binding and bridging several RNA helices of the 16S rRNA. Functionally, forms an intersubunit bridge (bridge B4) with the 23S rRNA of the 50S subunit in the ribosome. The chain is Small ribosomal subunit protein uS15 from Clostridium perfringens (strain ATCC 13124 / DSM 756 / JCM 1290 / NCIMB 6125 / NCTC 8237 / Type A).